The sequence spans 1266 residues: Formin-like protein 13 (1266 aa).

A Phosphatase tensin-type domain is found at 9–193; sequence YRKPPDGLLE…QYVSRRNLVS (185 aa). The Phosphocysteine intermediate role is filled by cysteine 126. A C2 tensin-type domain is found at 199–337; it reads DRALTMDCVI…FRVELLFSDM (139 aa). 4 disordered regions span residues 497–568, 597–825, 881–902, and 1210–1266; these read KPLV…LQHS, KNLI…GKGR, SASA…PKPE, and QLEA…RTAP. Over residues 529–538 the composition is skewed to pro residues; sequence PPTPSPPHPV. Residues 617 to 644 are compositionally biased toward polar residues; sequence EPSSKTTNSLLLSPQASPATPTNPSKTV. Pro residues-rich tracts occupy residues 686–698, 706–742, 754–781, and 806–815; these read LPRP…PPPM, VPPP…PPTP, PPAP…PPPL, and PNVPPTPALP. In terms of domain architecture, FH2 spans 829–1226; sequence VNLKNSPAKK…KNAAEKEKPK (398 aa). Composition is skewed to basic and acidic residues over residues 889–902, 1210–1248, and 1255–1266; these read GKSR…PKPE, QLEA…EKTK, and EMSDRLKERTAP.

It belongs to the formin-like family. Class-II subfamily.

The chain is Formin-like protein 13 (FH13) from Arabidopsis thaliana (Mouse-ear cress).